We begin with the raw amino-acid sequence, 94 residues long: Integration host factor subunit beta (94 aa).

It belongs to the bacterial histone-like protein family. As to quaternary structure, heterodimer of an alpha and a beta chain.

Its function is as follows. This protein is one of the two subunits of integration host factor, a specific DNA-binding protein that functions in genetic recombination as well as in transcriptional and translational control. This chain is Integration host factor subunit beta, found in Xanthobacter autotrophicus (strain ATCC BAA-1158 / Py2).